The following is a 364-amino-acid chain: Methylthioribose-1-phosphate isomerase (364 aa).

D254 functions as the Proton donor in the catalytic mechanism.

The protein belongs to the eIF-2B alpha/beta/delta subunits family. MtnA subfamily.

The protein localises to the cytoplasm. It is found in the nucleus. It catalyses the reaction 5-(methylsulfanyl)-alpha-D-ribose 1-phosphate = 5-(methylsulfanyl)-D-ribulose 1-phosphate. The protein operates within amino-acid biosynthesis; L-methionine biosynthesis via salvage pathway; L-methionine from S-methyl-5-thio-alpha-D-ribose 1-phosphate: step 1/6. In terms of biological role, catalyzes the interconversion of methylthioribose-1-phosphate (MTR-1-P) into methylthioribulose-1-phosphate (MTRu-1-P). This Drosophila yakuba (Fruit fly) protein is Methylthioribose-1-phosphate isomerase.